Here is a 132-residue protein sequence, read N- to C-terminus: Large ribosomal subunit protein uL14 (132 aa).

It belongs to the universal ribosomal protein uL14 family. As to quaternary structure, part of the 50S ribosomal subunit. Forms a cluster with proteins L3 and L24e, part of which may contact the 16S rRNA in 2 intersubunit bridges.

Functionally, binds to 23S rRNA. Forms part of two intersubunit bridges in the 70S ribosome. The polypeptide is Large ribosomal subunit protein uL14 (Methanocaldococcus jannaschii (strain ATCC 43067 / DSM 2661 / JAL-1 / JCM 10045 / NBRC 100440) (Methanococcus jannaschii)).